We begin with the raw amino-acid sequence, 430 residues long: Adenylosuccinate synthetase (430 aa).

Residues 13–19 (GDEGKGK) and 41–43 (GHT) contribute to the GTP site. Catalysis depends on aspartate 14, which acts as the Proton acceptor. Aspartate 14 and glycine 41 together coordinate Mg(2+). Residues 14 to 17 (DEGK), 39 to 42 (NAGH), threonine 130, arginine 144, glutamine 225, threonine 240, and arginine 304 each bind IMP. The Proton donor role is filled by histidine 42. 300–306 (ASTGRPR) contributes to the substrate binding site. GTP is bound by residues arginine 306, 332–334 (KLD), and 414–416 (STG).

Belongs to the adenylosuccinate synthetase family. As to quaternary structure, homodimer. The cofactor is Mg(2+).

It localises to the cytoplasm. The catalysed reaction is IMP + L-aspartate + GTP = N(6)-(1,2-dicarboxyethyl)-AMP + GDP + phosphate + 2 H(+). It functions in the pathway purine metabolism; AMP biosynthesis via de novo pathway; AMP from IMP: step 1/2. Plays an important role in the de novo pathway of purine nucleotide biosynthesis. Catalyzes the first committed step in the biosynthesis of AMP from IMP. In Xylella fastidiosa (strain 9a5c), this protein is Adenylosuccinate synthetase.